The sequence spans 190 residues: ATP synthase subunit b (190 aa).

Residues 34–54 form a helical membrane-spanning segment; sequence LDIFETNLINLAILVGILFYF.

It belongs to the ATPase B chain family. As to quaternary structure, F-type ATPases have 2 components, F(1) - the catalytic core - and F(0) - the membrane proton channel. F(1) has five subunits: alpha(3), beta(3), gamma(1), delta(1), epsilon(1). F(0) has four main subunits: a(1), b(1), b'(1) and c(10-14). The alpha and beta chains form an alternating ring which encloses part of the gamma chain. F(1) is attached to F(0) by a central stalk formed by the gamma and epsilon chains, while a peripheral stalk is formed by the delta, b and b' chains.

It is found in the cellular thylakoid membrane. Its function is as follows. F(1)F(0) ATP synthase produces ATP from ADP in the presence of a proton or sodium gradient. F-type ATPases consist of two structural domains, F(1) containing the extramembraneous catalytic core and F(0) containing the membrane proton channel, linked together by a central stalk and a peripheral stalk. During catalysis, ATP synthesis in the catalytic domain of F(1) is coupled via a rotary mechanism of the central stalk subunits to proton translocation. In terms of biological role, component of the F(0) channel, it forms part of the peripheral stalk, linking F(1) to F(0). This Nostoc punctiforme (strain ATCC 29133 / PCC 73102) protein is ATP synthase subunit b.